Consider the following 110-residue polypeptide: uncharacterized protein (110 aa).

Residues 16–46 are a coiled coil; the sequence is ELDKLRECEERLSVIEKQKQSSKQESEETYI. The span at 85-96 shows a compositional bias: basic and acidic residues; it reads EEKDKKCQRKPE. The segment at 85-110 is disordered; that stretch reads EEKDKKCQRKPEAPSTPAVTIRSKRQ.

This is an uncharacterized protein from Bacillus subtilis (strain 168).